Reading from the N-terminus, the 467-residue chain is MSPQTETKASVGFKAGVKDYKLTYYTPDYETKDTDILAAFRVTPQPGVPPEEAGAAVAAESSTGTWTTVWTDGLTSLDRYKGRCYHIETVVGEENQYIAYVAYPLDLFEEGSVTNMFTSIVGNVFGFKALRALRLEDLRIPTSYSKTFQGPPHGIQVERDKLNKYGRPLLGCTIKPKLGLSAKNYGRAVYECLRGGLDFTKDDENVNSQPFMRWRDRFLFCAEALYKAQAETGEIKGHYLNATAGTCEEMMKRAMCARELGVPIVMHDYLTGGFTANTSLAHYCRDNGLLLHIHRAMHAVIDRQKNHGMHFRVLAKALRMSGGDHIHAGTVVGKLEGEREMTLGFVDLLRDDFIEKDRSRGIFFTQDWVSMPGVLPVASGGIHVWHMPALTEIFGDDSVLQFGGGTLGHPWGNAPGAVANRVALEACVQARNEGRDLAREGNEIIREASKWSPELAAACEVWKAIKF.

A propeptide spanning residues 1 to 2 (MS) is cleaved from the precursor. N-acetylproline is present on Pro-3. The residue at position 14 (Lys-14) is an N6,N6,N6-trimethyllysine. Substrate-binding residues include Asn-123 and Thr-173. Residue Lys-175 is the Proton acceptor of the active site. Position 177 (Lys-177) interacts with substrate. The Mg(2+) site is built by Lys-201, Asp-203, and Glu-204. Lys-201 is subject to N6-carboxylysine. His-294 serves as the catalytic Proton acceptor. Residues Arg-295, His-327, and Ser-379 each coordinate substrate.

Belongs to the RuBisCO large chain family. Type I subfamily. In terms of assembly, heterohexadecamer of 8 large chains and 8 small chains; disulfide-linked. The disulfide link is formed within the large subunit homodimers. Requires Mg(2+) as cofactor. The disulfide bond which can form in the large chain dimeric partners within the hexadecamer appears to be associated with oxidative stress and protein turnover.

Its subcellular location is the plastid. It localises to the chloroplast. It catalyses the reaction 2 (2R)-3-phosphoglycerate + 2 H(+) = D-ribulose 1,5-bisphosphate + CO2 + H2O. The enzyme catalyses D-ribulose 1,5-bisphosphate + O2 = 2-phosphoglycolate + (2R)-3-phosphoglycerate + 2 H(+). Functionally, ruBisCO catalyzes two reactions: the carboxylation of D-ribulose 1,5-bisphosphate, the primary event in carbon dioxide fixation, as well as the oxidative fragmentation of the pentose substrate in the photorespiration process. Both reactions occur simultaneously and in competition at the same active site. The sequence is that of Ribulose bisphosphate carboxylase large chain from Phoenix reclinata (Senegal date palm).